A 125-amino-acid polypeptide reads, in one-letter code: Small ribosomal subunit protein eS8 (125 aa).

Residues 1-23 are compositionally biased toward basic residues; sequence MQFQGRSRRKYTGAKLKSARGKR. Residues 1–34 are disordered; the sequence is MQFQGRSRRKYTGAKLKSARGKRKFELGREPAAT.

Belongs to the eukaryotic ribosomal protein eS8 family. In terms of assembly, part of the 30S ribosomal subunit.

The sequence is that of Small ribosomal subunit protein eS8 from Methanococcoides burtonii (strain DSM 6242 / NBRC 107633 / OCM 468 / ACE-M).